We begin with the raw amino-acid sequence, 403 residues long: S-arrestin (403 aa).

T231 carries the phosphothreonine modification. The interval 381-403 is disordered; sequence RQNLKDTGENTEGKKDEDAGQDE.

This sequence belongs to the arrestin family. As to quaternary structure, monomer. Homodimer. Homotetramer. Interacts with RHO (via the phosphorylated C-terminus). In terms of tissue distribution, retina and pineal gland.

Its subcellular location is the cell projection. The protein resides in the cilium. It localises to the photoreceptor outer segment. It is found in the membrane. Functionally, binds to photoactivated, phosphorylated RHO and terminates RHO signaling via G-proteins by competing with G-proteins for the same binding site on RHO. May play a role in preventing light-dependent degeneration of retinal photoreceptor cells. The chain is S-arrestin (Sag) from Rattus norvegicus (Rat).